Reading from the N-terminus, the 286-residue chain is Putative WUSCHEL-related homeobox 2 (286 aa).

Disordered regions lie at residues 1 to 25 and 128 to 152; these read MAPAVQQQQSGGGGGSTGAAAVGST and SSSSSCGGGLNEDANSLLSPTSPTT. A DNA-binding region (homeobox; WUS-type) is located at residues 23 to 87; sequence GSTTRWCPTP…NHKARDRQKL (65 aa).

This sequence belongs to the WUS homeobox family.

It is found in the nucleus. Functionally, transcription factor which may be involved in developmental processes. This Oryza sativa subsp. indica (Rice) protein is Putative WUSCHEL-related homeobox 2 (WOX2).